The chain runs to 166 residues: Large ribosomal subunit protein uL10 (166 aa).

Belongs to the universal ribosomal protein uL10 family. In terms of assembly, part of the ribosomal stalk of the 50S ribosomal subunit. The N-terminus interacts with L11 and the large rRNA to form the base of the stalk. The C-terminus forms an elongated spine to which L12 dimers bind in a sequential fashion forming a multimeric L10(L12)X complex.

Forms part of the ribosomal stalk, playing a central role in the interaction of the ribosome with GTP-bound translation factors. This Enterococcus faecalis (strain ATCC 700802 / V583) protein is Large ribosomal subunit protein uL10.